Here is a 209-residue protein sequence, read N- to C-terminus: Transcription antitermination protein NusB (209 aa).

This sequence belongs to the NusB family.

Involved in transcription antitermination. Required for transcription of ribosomal RNA (rRNA) genes. Binds specifically to the boxA antiterminator sequence of the ribosomal RNA (rrn) operons. The protein is Transcription antitermination protein NusB of Crocosphaera subtropica (strain ATCC 51142 / BH68) (Cyanothece sp. (strain ATCC 51142)).